A 198-amino-acid polypeptide reads, in one-letter code: Imidazoleglycerol-phosphate dehydratase (198 aa).

Belongs to the imidazoleglycerol-phosphate dehydratase family.

The protein resides in the cytoplasm. The catalysed reaction is D-erythro-1-(imidazol-4-yl)glycerol 3-phosphate = 3-(imidazol-4-yl)-2-oxopropyl phosphate + H2O. It participates in amino-acid biosynthesis; L-histidine biosynthesis; L-histidine from 5-phospho-alpha-D-ribose 1-diphosphate: step 6/9. This Agrobacterium fabrum (strain C58 / ATCC 33970) (Agrobacterium tumefaciens (strain C58)) protein is Imidazoleglycerol-phosphate dehydratase.